Here is a 155-residue protein sequence, read N- to C-terminus: Ribosomal RNA large subunit methyltransferase H (155 aa).

S-adenosyl-L-methionine contacts are provided by residues L72, G103, and 122 to 127 (LSALTL).

Belongs to the RNA methyltransferase RlmH family. In terms of assembly, homodimer.

Its subcellular location is the cytoplasm. It catalyses the reaction pseudouridine(1915) in 23S rRNA + S-adenosyl-L-methionine = N(3)-methylpseudouridine(1915) in 23S rRNA + S-adenosyl-L-homocysteine + H(+). Functionally, specifically methylates the pseudouridine at position 1915 (m3Psi1915) in 23S rRNA. The sequence is that of Ribosomal RNA large subunit methyltransferase H from Salmonella dublin (strain CT_02021853).